The sequence spans 339 residues: Heat-inducible transcription repressor HrcA (339 aa).

It belongs to the HrcA family.

Negative regulator of class I heat shock genes (grpE-dnaK-dnaJ and groELS operons). Prevents heat-shock induction of these operons. The chain is Heat-inducible transcription repressor HrcA from Clostridioides difficile (strain 630) (Peptoclostridium difficile).